Consider the following 248-residue polypeptide: Adenosylcobinamide-GDP ribazoletransferase (248 aa).

The next 7 helical transmembrane spans lie at E24 to W44, I70 to S90, V106 to L126, I134 to A154, I168 to L188, G189 to I209, and A228 to I248.

Belongs to the CobS family. The cofactor is Mg(2+).

It localises to the cell membrane. It catalyses the reaction alpha-ribazole + adenosylcob(III)inamide-GDP = adenosylcob(III)alamin + GMP + H(+). The enzyme catalyses alpha-ribazole 5'-phosphate + adenosylcob(III)inamide-GDP = adenosylcob(III)alamin 5'-phosphate + GMP + H(+). Its pathway is cofactor biosynthesis; adenosylcobalamin biosynthesis; adenosylcobalamin from cob(II)yrinate a,c-diamide: step 7/7. Its function is as follows. Joins adenosylcobinamide-GDP and alpha-ribazole to generate adenosylcobalamin (Ado-cobalamin). Also synthesizes adenosylcobalamin 5'-phosphate from adenosylcobinamide-GDP and alpha-ribazole 5'-phosphate. The sequence is that of Adenosylcobinamide-GDP ribazoletransferase from Listeria monocytogenes serotype 4a (strain HCC23).